The chain runs to 230 residues: MSEIKDIVVQGLWKNNSALVQLLGLCPLLAVTSTATNALGLGLATTLVLTLTNLTVSALRRWTPAEIRIPIYVMIIASVVSAVQMLINAYAFGLYQSLGIFIPLIVTNCIVVGRAEAFAAKKGPWLSALDGFSIGMGATGAMFVLGSLREILGNGTLFDGADSLLGGWAKVLRVEIFHTDSPFLLAMLPPGAFIGLGLMLAVKYLIDEKMKKRRAETAPSAVPAGETGKV.

6 helical membrane-spanning segments follow: residues 18–38 (ALVQ…ATNA), 39–59 (LGLG…VSAL), 63–83 (TPAE…VSAV), 86–106 (LINA…PLIV), 125–145 (WLSA…MFVL), and 182–202 (PFLL…MLAV).

It belongs to the NqrDE/RnfAE family. In terms of assembly, the complex is composed of six subunits: RsxA, RsxB, RsxC, RsxD, RsxE and RsxG.

It is found in the cell inner membrane. Part of a membrane-bound complex that couples electron transfer with translocation of ions across the membrane. Required to maintain the reduced state of SoxR. This Salmonella agona (strain SL483) protein is Ion-translocating oxidoreductase complex subunit E.